Consider the following 228-residue polypeptide: 2-phospho-L-lactate guanylyltransferase (228 aa).

It belongs to the CofC family. Homodimer.

The catalysed reaction is (2S)-2-phospholactate + GTP + H(+) = (2S)-lactyl-2-diphospho-5'-guanosine + diphosphate. It functions in the pathway cofactor biosynthesis; coenzyme F420 biosynthesis. In terms of biological role, guanylyltransferase that catalyzes the activation of (2S)-2-phospholactate (2-PL) as (2S)-lactyl-2-diphospho-5'-guanosine, via the condensation of 2-PL with GTP. It is involved in the biosynthesis of coenzyme F420, a hydride carrier cofactor. The sequence is that of 2-phospho-L-lactate guanylyltransferase from Methanosphaera stadtmanae (strain ATCC 43021 / DSM 3091 / JCM 11832 / MCB-3).